The sequence spans 336 residues: C4-dicarboxylate-binding periplasmic protein DctP (336 aa).

The first 31 residues, 1-31 (MTRLNTCTFIKQIVKMTSIAALLGASLNSWA), serve as a signal peptide directing secretion. 6 residues coordinate (S)-malate: lysine 48, lysine 101, arginine 176, asparagine 216, asparagine 220, and tyrosine 243. Succinate-binding residues include lysine 48, lysine 101, arginine 176, asparagine 216, asparagine 220, and tyrosine 243.

It belongs to the bacterial solute-binding protein 7 family. The complex comprises the extracytoplasmic solute receptor protein DctP, and the two transmembrane proteins DctQ and DctM.

It is found in the periplasm. Functionally, part of the tripartite ATP-independent periplasmic (TRAP) transport system DctPQM involved in C4-dicarboxylates uptake. Required for the utilization of succinate, fumarate, L-malate and alpha-ketoglutarate. Binds succinate and malate. This chain is C4-dicarboxylate-binding periplasmic protein DctP, found in Shewanella loihica (strain ATCC BAA-1088 / PV-4).